Consider the following 157-residue polypeptide: ATP synthase subunit delta (157 aa).

It belongs to the ATPase delta chain family. F-type ATPases have 2 components, F(1) - the catalytic core - and F(0) - the membrane proton channel. F(1) has five subunits: alpha(3), beta(3), gamma(1), delta(1), epsilon(1). F(0) has three main subunits: a(1), b(2) and c(10-14). The alpha and beta chains form an alternating ring which encloses part of the gamma chain. F(1) is attached to F(0) by a central stalk formed by the gamma and epsilon chains, while a peripheral stalk is formed by the delta and b chains.

It is found in the cell membrane. Functionally, f(1)F(0) ATP synthase produces ATP from ADP in the presence of a proton or sodium gradient. F-type ATPases consist of two structural domains, F(1) containing the extramembraneous catalytic core and F(0) containing the membrane proton channel, linked together by a central stalk and a peripheral stalk. During catalysis, ATP synthesis in the catalytic domain of F(1) is coupled via a rotary mechanism of the central stalk subunits to proton translocation. Its function is as follows. This protein is part of the stalk that links CF(0) to CF(1). It either transmits conformational changes from CF(0) to CF(1) or is implicated in proton conduction. In Chloroflexus aurantiacus (strain ATCC 29364 / DSM 637 / Y-400-fl), this protein is ATP synthase subunit delta.